The sequence spans 279 residues: Ribosomal RNA large subunit methyltransferase E (279 aa).

A compositionally biased stretch (basic and acidic residues) spans 1 to 10 (MSDDDQKPED). A disordered region spans residues 1–66 (MSDDDQKPED…MKKGGDARAA (66 aa)). Gly136, Trp138, Asp154, Asp170, and Asp194 together coordinate S-adenosyl-L-methionine. Lys234 (proton acceptor) is an active-site residue.

This sequence belongs to the class I-like SAM-binding methyltransferase superfamily. RNA methyltransferase RlmE family.

The protein resides in the cytoplasm. It carries out the reaction uridine(2552) in 23S rRNA + S-adenosyl-L-methionine = 2'-O-methyluridine(2552) in 23S rRNA + S-adenosyl-L-homocysteine + H(+). In terms of biological role, specifically methylates the uridine in position 2552 of 23S rRNA at the 2'-O position of the ribose in the fully assembled 50S ribosomal subunit. This is Ribosomal RNA large subunit methyltransferase E from Maricaulis maris (strain MCS10) (Caulobacter maris).